The sequence spans 726 residues: Prolyl endopeptidase-like (726 aa).

Ser138 is subject to Phosphoserine. Catalysis depends on charge relay system residues Ser558, Asp644, and His689.

Belongs to the peptidase S9A family. As to quaternary structure, homodimer. Interacts with the AP-1 complex.

It localises to the cytoplasm. It is found in the cytosol. The protein localises to the golgi apparatus. The protein resides in the trans-Golgi network. Its subcellular location is the cytoskeleton. It localises to the nucleus. Its function is as follows. Serine peptidase whose precise substrate specificity remains unclear. Does not cleave peptides after a arginine or lysine residue. Regulates trans-Golgi network morphology and sorting by regulating the membrane binding of the AP-1 complex. May play a role in the regulation of synaptic vesicle exocytosis. The polypeptide is Prolyl endopeptidase-like (Prepl) (Rattus norvegicus (Rat)).